A 301-amino-acid polypeptide reads, in one-letter code: Probable alpha-L-glutamate ligase (301 aa).

Positions 104–287 (LQLLSRKGIG…VAGMIFDFIE (184 aa)) constitute an ATP-grasp domain. Residues lysine 141, 178–179 (EF), aspartate 187, and 211–213 (RSN) contribute to the ATP site. 3 residues coordinate Mg(2+): aspartate 248, glutamate 260, and asparagine 262. Residues aspartate 248, glutamate 260, and asparagine 262 each coordinate Mn(2+).

This sequence belongs to the RimK family. It depends on Mg(2+) as a cofactor. Mn(2+) serves as cofactor.

This chain is Probable alpha-L-glutamate ligase, found in Vibrio parahaemolyticus serotype O3:K6 (strain RIMD 2210633).